We begin with the raw amino-acid sequence, 411 residues long: Mannan endo-1,4-beta-mannosidase 1 (411 aa).

The first 17 residues, 1–17 (MLNILPFFLFFLPFLIG), serve as a signal peptide directing secretion. An N-linked (GlcNAc...) asparagine glycan is attached at Asn33. 2 residues coordinate substrate: Trp87 and Asn197. The active-site Proton donor is Glu198. A glycan (N-linked (GlcNAc...) asparagine) is linked at Asn202. Residue Tyr277 participates in substrate binding. The active-site Nucleophile is the Glu319. Residue Trp361 coordinates substrate. N-linked (GlcNAc...) asparagine glycans are attached at residues Asn366 and Asn384.

It belongs to the glycosyl hydrolase 5 (cellulase A) family. Expressed in roots, stems and flowers.

The protein localises to the secreted. It carries out the reaction Random hydrolysis of (1-&gt;4)-beta-D-mannosidic linkages in mannans, galactomannans and glucomannans.. This is Mannan endo-1,4-beta-mannosidase 1 (MAN1) from Arabidopsis thaliana (Mouse-ear cress).